The following is a 559-amino-acid chain: 2,3-bisphosphoglycerate-independent phosphoglycerate mutase (559 aa).

Mn(2+) contacts are provided by Asp28 and Ser81. Ser81 acts as the Phosphoserine intermediate in catalysis. Residues His140, 170-171 (RD), Arg206, Arg213, 286-289 (RADR), and Lys361 contribute to the substrate site. Positions 430, 434, 471, 472, and 501 each coordinate Mn(2+).

The protein belongs to the BPG-independent phosphoglycerate mutase family. As to quaternary structure, monomer. Mn(2+) is required as a cofactor. As to expression, found ubiquitously in germinating seed.

Its subcellular location is the cytoplasm. It catalyses the reaction (2R)-2-phosphoglycerate = (2R)-3-phosphoglycerate. Its pathway is carbohydrate degradation; glycolysis; pyruvate from D-glyceraldehyde 3-phosphate: step 3/5. In terms of biological role, catalyzes the interconversion of 2-phosphoglycerate and 3-phosphoglycerate. The polypeptide is 2,3-bisphosphoglycerate-independent phosphoglycerate mutase (Nicotiana tabacum (Common tobacco)).